Consider the following 473-residue polypeptide: Hyaluronidase-2 (473 aa).

An N-terminal signal peptide occupies residues 1 to 20 (MWTGLGPAVTLALVLVVAWA). 2 disulfides stabilise this stretch: cysteine 47–cysteine 343 and cysteine 214–cysteine 230. N-linked (GlcNAc...) asparagine glycosylation is found at asparagine 77 and asparagine 106. Glutamate 138 (proton donor) is an active-site residue. Asparagine 340 and asparagine 360 each carry an N-linked (GlcNAc...) asparagine glycan. One can recognise an EGF-like domain in the interval 364–442 (AAQYCSWAQC…YLGWGGEQCQ (79 aa)). Intrachain disulfides connect cysteine 368/cysteine 379, cysteine 373/cysteine 430, and cysteine 432/cysteine 441. Residue glycine 451 is the site of GPI-anchor amidated glycine attachment. The propeptide at 452-473 (ASGAWAGSHLTGLLAVAVLAFT) is removed in mature form.

This sequence belongs to the glycosyl hydrolase 56 family. As to quaternary structure, interacts with MST1R.

The protein localises to the cell membrane. The catalysed reaction is Random hydrolysis of (1-&gt;4)-linkages between N-acetyl-beta-D-glucosamine and D-glucuronate residues in hyaluronate.. Functionally, catalyzes hyaluronan degradation into small fragments that are endocytosed and degraded in lysosomes by HYAL1 and exoglycosidases. Essential for the breakdown of extracellular matrix hyaluronan. This Bos taurus (Bovine) protein is Hyaluronidase-2 (HYAL2).